A 470-amino-acid chain; its full sequence is 3-isopropylmalate dehydratase large subunit (470 aa).

[4Fe-4S] cluster-binding residues include Cys351, Cys411, and Cys414.

Belongs to the aconitase/IPM isomerase family. LeuC type 1 subfamily. In terms of assembly, heterodimer of LeuC and LeuD. It depends on [4Fe-4S] cluster as a cofactor.

The catalysed reaction is (2R,3S)-3-isopropylmalate = (2S)-2-isopropylmalate. It participates in amino-acid biosynthesis; L-leucine biosynthesis; L-leucine from 3-methyl-2-oxobutanoate: step 2/4. Its function is as follows. Catalyzes the isomerization between 2-isopropylmalate and 3-isopropylmalate, via the formation of 2-isopropylmaleate. The chain is 3-isopropylmalate dehydratase large subunit from Rhodopseudomonas palustris (strain BisA53).